The primary structure comprises 343 residues: Putative dihydroflavonol 4-reductase (343 aa).

Y150 is an NADP(+) binding site.

Belongs to the NAD(P)-dependent epimerase/dehydratase family. Dihydroflavonol-4-reductase subfamily.

The enzyme catalyses a (2R,3S,4S)-leucoanthocyanidin + NADP(+) = a (2R,3R)-dihydroflavonol + NADPH + H(+). It functions in the pathway secondary metabolite biosynthesis; flavonoid biosynthesis. The polypeptide is Putative dihydroflavonol 4-reductase (dfrA) (Synechocystis sp. (strain ATCC 27184 / PCC 6803 / Kazusa)).